Consider the following 612-residue polypeptide: Glutamine--fructose-6-phosphate aminotransferase [isomerizing] (612 aa).

Cys-2 serves as the catalytic Nucleophile; for GATase activity. In terms of domain architecture, Glutamine amidotransferase type-2 spans 2–220 (CGIVGAIRAH…DGDIALLASD (219 aa)). 2 SIS domains span residues 288 to 428 (AKSV…VRGL) and 461 to 602 (WAQQ…VDKP). Catalysis depends on Lys-607, which acts as the For Fru-6P isomerization activity.

Homodimer.

The protein localises to the cytoplasm. The enzyme catalyses D-fructose 6-phosphate + L-glutamine = D-glucosamine 6-phosphate + L-glutamate. In terms of biological role, catalyzes the first step in hexosamine metabolism, converting fructose-6P into glucosamine-6P using glutamine as a nitrogen source. The sequence is that of Glutamine--fructose-6-phosphate aminotransferase [isomerizing] from Neisseria meningitidis serogroup A / serotype 4A (strain DSM 15465 / Z2491).